The following is a 66-amino-acid chain: Beta-toxin Cb2 (66 aa).

The LCN-type CS-alpha/beta domain maps to Lys-1–Lys-66. 4 disulfide bridges follow: Cys-12–Cys-65, Cys-16–Cys-41, Cys-25–Cys-46, and Cys-29–Cys-48.

This sequence belongs to the long (4 C-C) scorpion toxin superfamily. Sodium channel inhibitor family. Beta subfamily. As to expression, expressed by the venom gland.

The protein resides in the secreted. Its function is as follows. Beta toxins bind voltage-independently at site-4 of sodium channels (Nav) and reduces peak current and shifts the voltage of activation toward more negative potentials thereby affecting sodium channel activation and promoting spontaneous and repetitive firing. Has an inhibitory effect on voltage-gated sodium channel hNav1.6/SCN8A, affecting both the activation and inactivation processes. Also reduces the peak current of hNav1.5/SCN5A but does not shift its voltage of activation. This toxin is active against mammals and lethal to mice. The sequence is that of Beta-toxin Cb2 from Centruroides baergi (Scorpion).